A 192-amino-acid chain; its full sequence is Small ribosomal subunit protein eS7 (192 aa).

It belongs to the eukaryotic ribosomal protein eS7 family.

The sequence is that of Small ribosomal subunit protein eS7 (RpS7) from Culex quinquefasciatus (Southern house mosquito).